Reading from the N-terminus, the 107-residue chain is MMTESEFIRASEALFEHIEDQIDENGWDFDCRFAGNVLTIEAGDGTQIIVNRHTPNQELWIAAKSGGYHFAEQNGKWLATRDSRDFYDVLNEALSAASGEAVEIEEL.

Belongs to the frataxin family.

Its function is as follows. Involved in iron-sulfur (Fe-S) cluster assembly. May act as a regulator of Fe-S biogenesis. The sequence is that of Iron-sulfur cluster assembly protein CyaY from Neisseria meningitidis serogroup C / serotype 2a (strain ATCC 700532 / DSM 15464 / FAM18).